The chain runs to 356 residues: MRLVLFILLLPVCLATPFHQKGLFDFMLEDEGSADLASTDDPVISGFGPVCPFRCQCHLRVVQCSDLGLERVPKDLPPDTTLLDLQNNKITEIRDGDFKNLKNLHALILVNNKISKISPQAFAPLKKLERLYLSKNNLKELPENMPKSLQEIRAHENEISKLRKAVFNGLNQVIVLELGTNPLKSSGIENGAFQGMKRLSYIRIADTNITSIPKGLPPSLTELHLDGNKISKIDAEGLSGLTNLAKLGLSFNSISSVENGSLNNVPHLRELHLNNNELVRVPSGLGEHKYIQVVYLHNNKIASIGINDFCPLGYNTKKATYSGVSLFSNPVQYWEIQPSAFRCIHERSAVQIGNYK.

The N-terminal stretch at 1 to 15 is a signal peptide; it reads MRLVLFILLLPVCLA. Positions 16–29 are excised as a propeptide; it reads TPFHQKGLFDFMLE. Ser45 is a glycosylation site (O-linked (Xyl...) (glycosaminoglycan) serine). 2 cysteine pairs are disulfide-bonded: Cys51–Cys57 and Cys55–Cys64. LRR repeat units lie at residues 70-90, 91-114, 115-138, 139-159, 160-183, 184-209, 210-230, 231-254, 255-278, 279-301, 302-331, and 332-356; these read ERVP…NNKI, TEIR…NNKI, SKIS…KNNL, KELP…ENEI, SKLR…TNPL, KSSG…DTNI, TSIP…GNKI, SKID…FNSI, SSVE…NNEL, VRVP…NNKI, ASIG…SNPV, and QYWE…GNYK. Residue Asn208 is glycosylated (N-linked (GlcNAc...) asparagine). Residue Asn259 is glycosylated (N-linked (GlcNAc...) asparagine). A disulfide bond links Cys310 and Cys343.

It belongs to the small leucine-rich proteoglycan (SLRP) family. SLRP class I subfamily. As to quaternary structure, binds to type I and type II collagen, to fibronectin and TGF-beta. Forms a ternary complex with MFAP2 and ELN. In terms of processing, the attached glycosaminoglycan chain can be either chondroitin sulfate or dermatan sulfate depending upon the tissue of origin.

The protein resides in the secreted. Its subcellular location is the extracellular space. The protein localises to the extracellular matrix. May affect the rate of fibrils formation. The polypeptide is Decorin (DCN) (Coturnix japonica (Japanese quail)).